Reading from the N-terminus, the 429-residue chain is Adenylosuccinate synthetase (429 aa).

Residues 12–18 (GDEGKGK) and 40–42 (GHT) each bind GTP. The active-site Proton acceptor is the Asp-13. Mg(2+)-binding residues include Asp-13 and Gly-40. IMP contacts are provided by residues 13–16 (DEGK), 38–41 (NAGH), Thr-129, Arg-143, Gln-223, Thr-238, and Arg-302. His-41 (proton donor) is an active-site residue. Residue 298 to 304 (TVTGRKR) coordinates substrate. GTP-binding positions include Arg-304, 330–332 (KLD), and 412–414 (STS).

Belongs to the adenylosuccinate synthetase family. Homodimer. It depends on Mg(2+) as a cofactor.

The protein localises to the cytoplasm. It carries out the reaction IMP + L-aspartate + GTP = N(6)-(1,2-dicarboxyethyl)-AMP + GDP + phosphate + 2 H(+). It participates in purine metabolism; AMP biosynthesis via de novo pathway; AMP from IMP: step 1/2. Its function is as follows. Plays an important role in the de novo pathway of purine nucleotide biosynthesis. Catalyzes the first committed step in the biosynthesis of AMP from IMP. The polypeptide is Adenylosuccinate synthetase (Sphingopyxis alaskensis (strain DSM 13593 / LMG 18877 / RB2256) (Sphingomonas alaskensis)).